Here is a 193-residue protein sequence, read N- to C-terminus: Ion-translocating oxidoreductase complex subunit A (193 aa).

The next 6 helical transmembrane spans lie at 5-25 (LLLF…FLGL), 39-59 (MGMG…AWLI), 63-83 (ILIP…VIAV), 102-122 (LLGI…VALL), 134-154 (ALYG…FTAI), and 171-191 (AIAL…SGLV).

This sequence belongs to the NqrDE/RnfAE family. The complex is composed of six subunits: RsxA, RsxB, RsxC, RsxD, RsxE and RsxG.

It localises to the cell inner membrane. Functionally, part of a membrane-bound complex that couples electron transfer with translocation of ions across the membrane. Required to maintain the reduced state of SoxR. The protein is Ion-translocating oxidoreductase complex subunit A of Shigella boydii serotype 4 (strain Sb227).